We begin with the raw amino-acid sequence, 150 residues long: Nucleoside diphosphate kinase (150 aa).

ATP contacts are provided by Lys-9, Phe-57, Arg-85, Thr-91, Arg-102, and Asn-112. Catalysis depends on His-115, which acts as the Pros-phosphohistidine intermediate.

It belongs to the NDK family. Mg(2+) is required as a cofactor.

It is found in the cytoplasm. The catalysed reaction is a 2'-deoxyribonucleoside 5'-diphosphate + ATP = a 2'-deoxyribonucleoside 5'-triphosphate + ADP. It catalyses the reaction a ribonucleoside 5'-diphosphate + ATP = a ribonucleoside 5'-triphosphate + ADP. Functionally, major role in the synthesis of nucleoside triphosphates other than ATP. The ATP gamma phosphate is transferred to the NDP beta phosphate via a ping-pong mechanism, using a phosphorylated active-site intermediate. This is Nucleoside diphosphate kinase from Methanoregula boonei (strain DSM 21154 / JCM 14090 / 6A8).